The chain runs to 117 residues: Ribonuclease P protein component (117 aa).

Belongs to the RnpA family. As to quaternary structure, consists of a catalytic RNA component (M1 or rnpB) and a protein subunit.

The enzyme catalyses Endonucleolytic cleavage of RNA, removing 5'-extranucleotides from tRNA precursor.. In terms of biological role, RNaseP catalyzes the removal of the 5'-leader sequence from pre-tRNA to produce the mature 5'-terminus. It can also cleave other RNA substrates such as 4.5S RNA. The protein component plays an auxiliary but essential role in vivo by binding to the 5'-leader sequence and broadening the substrate specificity of the ribozyme. This Thermotoga sp. (strain RQ2) protein is Ribonuclease P protein component.